The sequence spans 72 residues: Small ribosomal subunit protein bS18 (72 aa).

This sequence belongs to the bacterial ribosomal protein bS18 family. In terms of assembly, part of the 30S ribosomal subunit. Forms a tight heterodimer with protein bS6.

Its function is as follows. Binds as a heterodimer with protein bS6 to the central domain of the 16S rRNA, where it helps stabilize the platform of the 30S subunit. This chain is Small ribosomal subunit protein bS18, found in Aquifex aeolicus (strain VF5).